An 82-amino-acid chain; its full sequence is MAAKKEFDIFTHELVPEHRILSEEEKEELLRKYRIKISQLPQIKASDPAVVALGAKPGDVLEIKRKSPTAGYYYYYRLVVED.

Belongs to the archaeal Rpo5/eukaryotic RPB5 RNA polymerase subunit family. In terms of assembly, part of the RNA polymerase complex.

It localises to the cytoplasm. The catalysed reaction is RNA(n) + a ribonucleoside 5'-triphosphate = RNA(n+1) + diphosphate. In terms of biological role, DNA-dependent RNA polymerase (RNAP) catalyzes the transcription of DNA into RNA using the four ribonucleoside triphosphates as substrates. The protein is DNA-directed RNA polymerase subunit Rpo5 of Thermococcus onnurineus (strain NA1).